A 336-amino-acid chain; its full sequence is Dihydroorotate dehydrogenase (quinone) (336 aa).

FMN-binding positions include 62 to 66 (AGLDK) and threonine 86. Lysine 66 is a binding site for substrate. 111–115 (NRMGF) contributes to the substrate binding site. The FMN site is built by asparagine 139 and asparagine 172. Asparagine 172 serves as a coordination point for substrate. Serine 175 (nucleophile) is an active-site residue. Asparagine 177 provides a ligand contact to substrate. The FMN site is built by lysine 217 and threonine 245. A substrate-binding site is contributed by 246–247 (NT). FMN is bound by residues glycine 268, glycine 297, and 318-319 (YS).

This sequence belongs to the dihydroorotate dehydrogenase family. Type 2 subfamily. As to quaternary structure, monomer. Requires FMN as cofactor.

Its subcellular location is the cell membrane. The enzyme catalyses (S)-dihydroorotate + a quinone = orotate + a quinol. Its pathway is pyrimidine metabolism; UMP biosynthesis via de novo pathway; orotate from (S)-dihydroorotate (quinone route): step 1/1. Its function is as follows. Catalyzes the conversion of dihydroorotate to orotate with quinone as electron acceptor. In Shigella dysenteriae serotype 1 (strain Sd197), this protein is Dihydroorotate dehydrogenase (quinone).